A 215-amino-acid polypeptide reads, in one-letter code: MIEQLIQQAQPYWQQYIEHEFVQQLAKGTLPKACFQHYLKQDYLYLFHYSRAFALGVFKAKNFAEMETPRKTLEILCQEIQLHLNYCREWGISEQEIFTTQESAACIAYTRYLLDCGMTGSLAELYAAVTPCALGYAQVARYITQHYPRLPNNPYQTWIDTYASEEFQQAAQETVDFLTALCKPLNPSQLAEIQQIFTTATRMEIAFWQMGLDLA.

Belongs to the thiaminase-2 family.

This is an uncharacterized protein from Haemophilus influenzae (strain ATCC 51907 / DSM 11121 / KW20 / Rd).